The primary structure comprises 354 residues: Falstatin (354 aa).

Positions 1–21 (MKSITFFVFNICSILALLSHC) are cleaved as a signal peptide. A BC loop; binds and inhibits the active site cavity of cysteine proteases motif is present at residues 226–236 (LEGNAGTGYLW). Positions 274 to 317 (KYKIDEHDSSKNVNREIESPEQKESDSKPKKPQMQLLGGPDRMR) are disordered. Residues 275–302 (YKIDEHDSSKNVNREIESPEQKESDSKP) are compositionally biased toward basic and acidic residues.

It belongs to the protease inhibitor I71 family. In terms of assembly, oligomer; probably composed of 10 monomers. In terms of processing, during the liver stage, proteolytically cleaved.

The protein resides in the secreted. The protein localises to the cytoplasmic vesicle. Its subcellular location is the secretory vesicle. It localises to the microneme. It is found in the host cytoplasm. The protein resides in the parasitophorous vacuole lumen. Cysteine protease inhibitor. Required for the invasion of host erythrocytes by merozoites. In the mosquito vector, essential for the gliding motility of hemocoel sporozoites and, therefore, for salivary gland invasion and the subsequent transmission from the mosquito to the mammalian host. Required for the invasion of host hepatocytes. During the liver stage, may prevent host hepatocyte cell death likely by inhibiting host cysteine proteases. The chain is Falstatin from Plasmodium berghei (strain Anka).